Consider the following 300-residue polypeptide: Acetaldehyde dehydrogenase 3 (300 aa).

11–14 lines the NAD(+) pocket; that stretch reads SGNI. Cysteine 126 functions as the Acyl-thioester intermediate in the catalytic mechanism. Residues 157-165 and asparagine 276 each bind NAD(+); that span reads SAGPGTRAN.

Belongs to the acetaldehyde dehydrogenase family.

The catalysed reaction is acetaldehyde + NAD(+) + CoA = acetyl-CoA + NADH + H(+). In Rhodococcus opacus (strain B4), this protein is Acetaldehyde dehydrogenase 3.